The chain runs to 92 residues: Co-chaperonin GroES (92 aa).

This sequence belongs to the GroES chaperonin family. Heptamer of 7 subunits arranged in a ring. Interacts with the chaperonin GroEL.

Its subcellular location is the cytoplasm. Functionally, together with the chaperonin GroEL, plays an essential role in assisting protein folding. The GroEL-GroES system forms a nano-cage that allows encapsulation of the non-native substrate proteins and provides a physical environment optimized to promote and accelerate protein folding. GroES binds to the apical surface of the GroEL ring, thereby capping the opening of the GroEL channel. This chain is Co-chaperonin GroES, found in Methanosarcina barkeri (strain Fusaro / DSM 804).